A 90-amino-acid polypeptide reads, in one-letter code: UPF0367 protein PMT9312_0127 (90 aa).

Belongs to the UPF0367 family.

The protein is UPF0367 protein PMT9312_0127 of Prochlorococcus marinus (strain MIT 9312).